We begin with the raw amino-acid sequence, 262 residues long: Shikimate dehydrogenase (NADP(+)) (262 aa).

Shikimate contacts are provided by residues 15 to 17 (SRS) and Thr-62. The active-site Proton acceptor is Lys-66. Glu-78 serves as a coordination point for NADP(+). Shikimate is bound by residues Asn-87 and Asp-102. NADP(+) contacts are provided by residues 126-130 (GAGGA), 150-155 (NRTLAR), and Met-214. Position 216 (Tyr-216) interacts with shikimate. Residue Gly-236 participates in NADP(+) binding.

It belongs to the shikimate dehydrogenase family. Homodimer.

It catalyses the reaction shikimate + NADP(+) = 3-dehydroshikimate + NADPH + H(+). It functions in the pathway metabolic intermediate biosynthesis; chorismate biosynthesis; chorismate from D-erythrose 4-phosphate and phosphoenolpyruvate: step 4/7. Functionally, involved in the biosynthesis of the chorismate, which leads to the biosynthesis of aromatic amino acids. Catalyzes the reversible NADPH linked reduction of 3-dehydroshikimate (DHSA) to yield shikimate (SA). This Acinetobacter baumannii (strain AB307-0294) protein is Shikimate dehydrogenase (NADP(+)).